A 46-amino-acid chain; its full sequence is Amine oxidase [flavin-containing] A (46 aa).

This sequence belongs to the flavin monoamine oxidase family. In terms of assembly, monomer, homo- or heterodimer (containing two subunits of similar size). Each subunit contains a covalently bound flavin. Enzymatically active as monomer. Requires FAD as cofactor.

It localises to the mitochondrion outer membrane. It carries out the reaction a secondary aliphatic amine + O2 + H2O = a primary amine + an aldehyde + H2O2. The catalysed reaction is a primary methyl amine + O2 + H2O = an aldehyde + H2O2 + NH4(+). It catalyses the reaction (R)-adrenaline + O2 + H2O = (R)-3,4-dihydroxymandelaldehyde + methylamine + H2O2. The enzyme catalyses dopamine + O2 + H2O = 3,4-dihydroxyphenylacetaldehyde + H2O2 + NH4(+). It carries out the reaction tyramine + O2 + H2O = (4-hydroxyphenyl)acetaldehyde + H2O2 + NH4(+). The catalysed reaction is (R)-noradrenaline + O2 + H2O = (R)-3,4-dihydroxymandelaldehyde + H2O2 + NH4(+). It catalyses the reaction serotonin + O2 + H2O = (5-hydroxyindol-3-yl)acetaldehyde + H2O2 + NH4(+). The enzyme catalyses kynuramine + O2 + H2O = 3-(2-aminophenyl)-3-oxopropanal + H2O2 + NH4(+). It carries out the reaction tryptamine + O2 + H2O = indole-3-acetaldehyde + H2O2 + NH4(+). The catalysed reaction is 2-phenylethylamine + O2 + H2O = 2-phenylacetaldehyde + H2O2 + NH4(+). Its function is as follows. Catalyzes the oxidative deamination of primary and some secondary amine such as neurotransmitters, with concomitant reduction of oxygen to hydrogen peroxide and has important functions in the metabolism of neuroactive and vasoactive amines in the central nervous system and peripheral tissues. Preferentially oxidizes serotonin. Also catalyzes the oxidative deamination of kynuramine to 3-(2-aminophenyl)-3-oxopropanal that can spontaneously condense to 4-hydroxyquinoline. This is Amine oxidase [flavin-containing] A from Ovis aries (Sheep).